The sequence spans 507 residues: MDTINRRIRVRFAPSPTGPLHIGGVRTALYNYLFARQHGGDMILRIEDTDSNRFVPGAEAYIIEALEWLGIKFDEGVGYGGRFGPYRQSERRDIYRTYVRQLLDSGRAYIAFDTPEELEARRAEVPNFQYDATTRGQMRNSLTLPAEEVERLVAEGTQYVVRFLVEPNVDVEVNDLIRGRVVIDSSILDDKVLYKSADDLPTYHLANIVDDHLMEVSHVIRGEEWLPSAPLHVLLYRAFGWEDTMPRFAHLALLLKPEGNGKLSKRDGDRLGFPVFPLEWKDPQTGDISKGYRESGYLPEAVVNFLALLGWNPGNDQDVMSMDELIRLFDIEKCSKAGAKFDYEKGRWFNHQYIQRKDNAELAELFRPILRENGVVATDEKTAHVISLVKERVNFIGELWEQAGFFFIAPLSYDEKTVKKRWKEDTAKQLGELAELLDSHRSFAAEATEPTVKNWIETNGYHLGNIMNATRLALVGESKGPHIFDIMEVLGREETVGRIRRAIEILG.

Residues 14-24 (PSPTGPLHIGG) carry the 'HIGH' region motif. A 'KMSKS' region motif is present at residues 262-266 (KLSKR). Position 265 (lysine 265) interacts with ATP.

Belongs to the class-I aminoacyl-tRNA synthetase family. Glutamate--tRNA ligase type 1 subfamily. In terms of assembly, monomer.

The protein localises to the cytoplasm. The enzyme catalyses tRNA(Glu) + L-glutamate + ATP = L-glutamyl-tRNA(Glu) + AMP + diphosphate. Its function is as follows. Catalyzes the attachment of glutamate to tRNA(Glu) in a two-step reaction: glutamate is first activated by ATP to form Glu-AMP and then transferred to the acceptor end of tRNA(Glu). The sequence is that of Glutamate--tRNA ligase from Porphyromonas gingivalis (strain ATCC 33277 / DSM 20709 / CIP 103683 / JCM 12257 / NCTC 11834 / 2561).